Reading from the N-terminus, the 179-residue chain is SAEVAGAIIDGASLTFDVLQTVLKALGDVSRKIAVGIDNEPGMTWTAMNTYFRSGTSDVILPHTVPHSKALLYDGQKNRGPVTTGVVGVIAYAMSDGNTLAVLFSIPFDYNLYSNWWNVKVYKGHRRADQAMYEELYYDFSPFRGDNGWHTKSIGYGLKGRGFMNSSGKAILQIHVNKV.

Residues 1–29 are N-terminal alpha-helix that contributes to the pore; sequence SAEVAGAIIDGASLTFDVLQTVLKALGDV. The interval 11–30 is N-terminal region; the sequence is GASLTFDVLQTVLKALGDVS. Arginine 31 serves as a coordination point for an N-(acyl)-sphingosylphosphocholine. The N-acetyl-D-glucosamine 6-sulfate site is built by tyrosine 51 and arginine 53. Residues arginine 53, serine 54, arginine 79, glycine 85, tyrosine 113, serine 114, tryptophan 116, tyrosine 133, tyrosine 137, tyrosine 138, arginine 144, and glycine 168 each contribute to the an N-(acyl)-sphingosylphosphocholine site. The segment at 105–120 is trp-rich region, which is important for the binding to lipid membrane; that stretch reads SIPFDYNLYSNWWNVK. Tyrosine 138 contacts N-acetyl-D-glucosamine 6-sulfate. Residues 144–146 carry the Cell attachment site, crucial for protein stability motif; sequence RGD.

The protein belongs to the actinoporin family. Sea anemone subfamily. In terms of assembly, octamer or nonamer in membranes. Monomer in the soluble state.

The protein localises to the secreted. The protein resides in the nematocyst. It is found in the target cell membrane. In terms of biological role, pore-forming toxin (PFT) that consists of a crown-shaped octamer or nonamer that forms cation-selective hydrophilic pores of about 1.5 nm (inside) and 13 nm (outside) and causes cytolysis. It causes cardiac stimulation. Also causes hemolysis (HC(50)=0.3 nM). Interestingly, the Phe-16 is crucial for hemolysis. Pore formation is a multi-step process that involves specific recognition of membrane sphingomyelin (but neither cholesterol nor phosphatidylcholine) using aromatic rich region and adjacent phosphocholine (POC) binding site, firm binding to the membrane (mainly driven by hydrophobic interactions) accompanied by the transfer of the N-terminal region to the lipid-water interface and finally pore formation after oligomerization of monomers. It is probable that a dimeric form is an assembly intermediate before the complete oligomerization. The formation of stable pores occurs only in vesicles composed of DOPC/SM (there is no oligomerization when the PFT is treated with vesicles of DOPC or SM alone). The transmembrane pore displays 8 lateral perforations, one at each subunit-subunit interface, partially occupied by the acyl-chain region of a bridging lipid. Each pore contains 24 lipid molecules, firmly bound to each subunit, that is, 3 lipids (L1, L2, L3, L4 and/or L5) are associated to each subunit. Lipid L1 bridges 2 subunits, whereas lipids L2 and L3 bind to sites at single subunit. In Actinia fragacea (Strawberry anemone), this protein is DELTA-actitoxin-Afr1c.